The primary structure comprises 150 residues: Small ribosomal subunit protein bS6 (150 aa).

The disordered stretch occupies residues 99-150 (GPSAMLQKRDRDDRGERGERGFGGGGFGGGRDREDRPRRGRDREEAATEETF). Basic and acidic residues-rich tracts occupy residues 105–118 (QKRD…RGER) and 128–144 (GRDR…REEA).

This sequence belongs to the bacterial ribosomal protein bS6 family.

In terms of biological role, binds together with bS18 to 16S ribosomal RNA. In Azorhizobium caulinodans (strain ATCC 43989 / DSM 5975 / JCM 20966 / LMG 6465 / NBRC 14845 / NCIMB 13405 / ORS 571), this protein is Small ribosomal subunit protein bS6.